Here is a 46-residue protein sequence, read N- to C-terminus: uncharacterized protein (46 aa).

The tract at residues 1-46 (MEVTPLETGRARSHQKASTAAQPHAADEKMTGSTARRYLSQDHQSV) is disordered.

This is an uncharacterized protein from Treponema pallidum (strain Nichols).